The sequence spans 672 residues: Penicillin-binding protein activator LpoA (672 aa).

Residues 1-26 (MLPFHLVRTQAGRVIPVLLAALFLAG) form the signal peptide. Cys27 is lipidated: N-palmitoyl cysteine. Residue Cys27 is the site of S-diacylglycerol cysteine attachment. A disordered region spans residues 298–336 (APPTDTAQAGQVTPSSDGQNAQSPAPYSDQAVASTTPAP). A compositionally biased stretch (polar residues) spans 305 to 322 (QAGQVTPSSDGQNAQSPA). Residues 327 to 336 (QAVASTTPAP) are compositionally biased toward low complexity.

It belongs to the LpoA family. As to quaternary structure, interacts with PBP1a.

It localises to the cell outer membrane. Functionally, regulator of peptidoglycan synthesis that is essential for the function of penicillin-binding protein 1A (PBP1a). In Pectobacterium parmentieri (strain WPP163) (Pectobacterium wasabiae (strain WPP163)), this protein is Penicillin-binding protein activator LpoA.